The sequence spans 63 residues: MKASELTEKSVEELNAELLGLLREQFNLRMQHATGQLTQTHQLKIVRRNIARVKTIITSKAGA.

This sequence belongs to the universal ribosomal protein uL29 family.

The protein is Large ribosomal subunit protein uL29 of Shewanella halifaxensis (strain HAW-EB4).